A 688-amino-acid chain; its full sequence is MNPLALLVEILIIIEVTTKNTEAERYNRKQKEVNVTTQVSVSKVKQFLLYLLEQGNANKITNKRENPLEKKKHQHKLKIKGIQNKNLLKRNQNYFKNPAKKSITDEGDELFKMGNKILQESKSQKQKTEAYTLFTRAANMGNLKAMEKMADAWLFGSFGMQNITAAIQLYESLAKEGSYKAQNALGFLSSYGIGMEYDQAKALIYYTFGSAGGSMMSQMILGYRYLSGINVLQNCEVALNHYKKVADYIADKLEKSEGIPVEKVRLTERPENLSSNSEILDWDIYQYYKFLAERGDVQIQVSLGQLHLIGRKGLDQDYSKALYYFLKAAKAGSANAMAFIGKMYFEGNAAAPQNNATAFKYFSMAASKGNAIGLHGLGLLYFHGKGVPVNYGEALKYFQKAAEKGWPNAQFQLGFMYYSGSGVWKDYKLAFKYFYLASQSGQPLAIYYLAEMYATGTGVLRSCRTAVELYKGVCELGHWAEKFLTAYFAYKDGDIDSSLIQYALLAEMGYEVAQSNSAFILESKKAKILGKEKLYPMALLLWNRAAIQGNAFARVKIGDYHYYGYGTKKDYETAATHYSIAADKHHSAQAMFNLAYMYEHGLGIAKDIHLARRLYDMAAQTSPDAHIPVFFALMKLETMHLLHDILFFNFTMKWKWLKLDSTVGPYWDLLVIGLIVAMLIFLLRNRHR.

The first 18 residues, 1 to 18 (MNPLALLVEILIIIEVTT), serve as a signal peptide directing secretion. At 19-662 (KNTEAERYNR…KWKWLKLDST (644 aa)) the chain is on the extracellular side. The N-linked (GlcNAc...) asparagine glycan is linked to Asn-34. Sel1-like repeat units lie at residues 107 to 142 (GDEL…NMGN), 143 to 178 (LKAM…KEGS), 179 to 214 (YKAQ…AGGS), 215 to 250 (MMSQ…DYIA), 297 to 333 (VQIQ…KAGS), 334 to 370 (ANAM…SKGN), 371 to 406 (AIGL…EKGW), 407 to 442 (PNAQ…QSGQ), 443 to 478 (PLAI…ELGH), 551 to 586 (AFAR…DKHH), and 588 to 623 (AQAM…QTSP). Asn-162 carries an N-linked (GlcNAc...) asparagine glycan. Residues 663–683 (VGPYWDLLVIGLIVAMLIFLL) traverse the membrane as a helical segment. Topologically, residues 684–688 (RNRHR) are cytoplasmic.

It belongs to the sel-1 family.

It is found in the membrane. It localises to the cell projection. Its subcellular location is the cilium. The protein localises to the nucleus speckle. This is Protein sel-1 homolog 2 (Sel1l2) from Mus musculus (Mouse).